Reading from the N-terminus, the 384-residue chain is PqqA peptide cyclase (384 aa).

The 216-residue stretch at V5–A220 folds into the Radical SAM core domain. [4Fe-4S] cluster-binding residues include C19, C23, and C26.

Belongs to the radical SAM superfamily. PqqE family. As to quaternary structure, interacts with PqqD. The interaction is necessary for activity of PqqE. [4Fe-4S] cluster serves as cofactor.

The enzyme catalyses [PQQ precursor protein] + S-adenosyl-L-methionine = E-Y cross-linked-[PQQ precursor protein] + 5'-deoxyadenosine + L-methionine + H(+). Its pathway is cofactor biosynthesis; pyrroloquinoline quinone biosynthesis. Catalyzes the cross-linking of a glutamate residue and a tyrosine residue in the PqqA protein as part of the biosynthesis of pyrroloquinoline quinone (PQQ). The polypeptide is PqqA peptide cyclase (Acinetobacter baumannii (strain AB0057)).